We begin with the raw amino-acid sequence, 264 residues long: MYKECFKIALGIEYNGSNYHGWQYQKFASSVQEKVELALSIIANHPVRVTCAGRTDAGVHSTGQVVHFCTSSIRNDQAWILGTNRYLPKDISVIWKRDVPMHFHARYSALSRRYRYILYNNSCRSSIFYQGLKFYHRILNVEKMNQAAQYLLGEHDFTTFRSSHCQSKTPFRKILYVNVFCINCLIIIDIVANSFLYHMVRNIVGCLIEIGISKKKVTWIRDILKFKNRTSSTKIVESNGLYLVQVQYSSLFKLPICPVGPFFV.

Aspartate 56 serves as the catalytic Nucleophile. Residue tyrosine 114 participates in substrate binding.

This sequence belongs to the tRNA pseudouridine synthase TruA family. In terms of assembly, homodimer.

It catalyses the reaction uridine(38/39/40) in tRNA = pseudouridine(38/39/40) in tRNA. Functionally, formation of pseudouridine at positions 38, 39 and 40 in the anticodon stem and loop of transfer RNAs. The sequence is that of tRNA pseudouridine synthase A from Buchnera aphidicola subsp. Baizongia pistaciae (strain Bp).